The primary structure comprises 312 residues: Ribosomal RNA small subunit methyltransferase H (312 aa).

Residues 32–34 (AGH), Asp52, Phe79, Asp100, and Gln107 each bind S-adenosyl-L-methionine.

Belongs to the methyltransferase superfamily. RsmH family.

Its subcellular location is the cytoplasm. It carries out the reaction cytidine(1402) in 16S rRNA + S-adenosyl-L-methionine = N(4)-methylcytidine(1402) in 16S rRNA + S-adenosyl-L-homocysteine + H(+). Specifically methylates the N4 position of cytidine in position 1402 (C1402) of 16S rRNA. This chain is Ribosomal RNA small subunit methyltransferase H, found in Listeria monocytogenes serotype 4b (strain F2365).